Consider the following 261-residue polypeptide: Undecaprenyl-diphosphatase (261 aa).

The next 7 membrane-spanning stretches (helical) occupy residues arginine 38–phenylalanine 58, arginine 75–valine 95, isoleucine 106–valine 126, valine 136–glycine 156, phenylalanine 181–leucine 201, valine 217–isoleucine 237, and serine 241–threonine 261.

Belongs to the UppP family.

It localises to the cell inner membrane. It catalyses the reaction di-trans,octa-cis-undecaprenyl diphosphate + H2O = di-trans,octa-cis-undecaprenyl phosphate + phosphate + H(+). In terms of biological role, catalyzes the dephosphorylation of undecaprenyl diphosphate (UPP). Confers resistance to bacitracin. The protein is Undecaprenyl-diphosphatase of Xylella fastidiosa (strain Temecula1 / ATCC 700964).